The chain runs to 1025 residues: Multidrug resistance protein MdtC (1025 aa).

Residues 1-6 (MKFFAL) are Cytoplasmic-facing. The chain crosses the membrane as a helical span at residues 7 to 29 (FIYRPVATILLSVAITLCGILGF). Over 30 to 335 (RMLPVAPLPQ…TIRASLEEVE (306 aa)) the chain is Periplasmic. A helical membrane pass occupies residues 336 to 353 (QTLIISVALVILVVFLFL). Over 354–359 (RSGRAT) the chain is Cytoplasmic. A helical membrane pass occupies residues 360–379 (IIPAVAVPVSLIGTFAAMYL). At 380–388 (CGFSLNNLS) the chain is on the periplasmic side. A helical transmembrane segment spans residues 389–411 (LMALTIATGFVVDDAIVVLENIA). Over 412 to 430 (RHLEAGMKPLQAALQGTRE) the chain is Cytoplasmic. Residues 431-453 (VGFTVLSMSLSLVAVFLPLLLMG) form a helical membrane-spanning segment. Topologically, residues 454 to 467 (GLPGRLLREFAVTL) are periplasmic. A helical transmembrane segment spans residues 468–490 (SVAIGISLLVSLTLTPMMCGWML). At 491–852 (KASKPREQKR…QVFQETMNSQ (362 aa)) the chain is on the cytoplasmic side. A helical membrane pass occupies residues 853-875 (VILIIAAIATVYIVLGILYESYV). Residues 876 to 894 (HPLTILSTLPSAGVGALLA) lie on the Periplasmic side of the membrane. The chain crosses the membrane as a helical span at residues 895–917 (LELFNAPFSLIALIGIMLLIGIV). Residues 918–947 (KKNAIMMVDFALEAQRHGNLTPQEAIFQAC) are Cytoplasmic-facing. Residues 948–970 (LLRFRPIMMTTLAALFGALPLVL) traverse the membrane as a helical segment. Residues 971-984 (SGGDGSELRQPLGI) lie on the Periplasmic side of the membrane. The chain crosses the membrane as a helical span at residues 985–1007 (TIVGGLVMSQLLTLYTTPVVYLF). Residues 1008–1025 (FDRLRLRFSRKPKQAVTE) are Cytoplasmic-facing.

This sequence belongs to the resistance-nodulation-cell division (RND) (TC 2.A.6) family. MdtC subfamily. In terms of assembly, part of a tripartite efflux system composed of MdtA, MdtB and MdtC. MdtC forms a heteromultimer with MdtB.

It is found in the cell inner membrane. The MdtABC tripartite complex confers resistance against novobiocin and deoxycholate. The polypeptide is Multidrug resistance protein MdtC (Escherichia coli O6:H1 (strain CFT073 / ATCC 700928 / UPEC)).